The primary structure comprises 107 residues: MNARKTYILKLYVAGNTPNSMRALNTLREILESEFKGVYALKVIDVLKSPQLAEEDKILATPTLSKILPPPVRRIIGDLSDREKVLIGLDLLYDELSDNEMFYSSDK.

Belongs to the KaiB family. As to quaternary structure, may undergo a major conformational rearrangment; in the free state forms homooligomers. When bound to KaiC switches to a monomeric thioredoxin-fold (KaiB(fs)). The active oscillator complex is probably KaiC(6):KaiB(6).

Its function is as follows. Component of the KaiBC clock protein complex, which constitutes the main circadian regulator in cyanobacteria; it may modify the ATPase activity of KaiC. May be a metamorphic protein which reversibly switches between an inactive tetrameric fold and a rare, thioredoxin-like monomeric fold (KaiB(fs)). KaiB(fs) binds phospho-KaiC, and perhaps clock output effectors. This Prochlorococcus marinus (strain NATL2A) protein is Circadian clock oscillator protein KaiB.